A 367-amino-acid polypeptide reads, in one-letter code: Leucine-rich repeat-containing protein 28 (367 aa).

LRR repeat units follow at residues 16 to 36 (KHKNLFLNYRNLHHFPLELLK), 42 to 63 (YLERLYMKRNSLTSLPENLAQK), 66 to 87 (NLVELYLHSNNIVVVPEAIGSL), 89 to 110 (KLQCLDLSDNALEIVCPEIGRL), 112 to 133 (ALRHLRLANNQLQFLPPEVGDL), 135 to 156 (ELQTLDISTNRLLTLPERLHMC), 158 to 180 (SLQYLTVDRNRLWYVPRHLCQLP), 181 to 202 (SLNELSMAGNRLAFLPLDLGRS), and 204 to 226 (ELQYVYVDNNIHLKGLPSYLYNK).

This Homo sapiens (Human) protein is Leucine-rich repeat-containing protein 28 (LRRC28).